Reading from the N-terminus, the 65-residue chain is MAFDTKLMEILACPVCKGKLDYDKAAQELICHFDRLAYSIEKDIPVLLENEAREINANQSTEQDG.

It belongs to the UPF0434 family.

The polypeptide is UPF0434 protein CPS_2127 (Colwellia psychrerythraea (strain 34H / ATCC BAA-681) (Vibrio psychroerythus)).